Here is a 3183-residue protein sequence, read N- to C-terminus: WD repeat- and FYVE domain-containing protein 4 (3183 aa).

Basic and acidic residues predominate over residues 1-15; the sequence is MEAEDLSKTEDRPED. 4 disordered regions span residues 1 to 37, 790 to 811, 938 to 977, and 1828 to 1852; these read MEAEDLSKTEDRPEDPGFQNEGQSPAVKPSFSLEGQS, AGQEPSVDAQKAEAGGRQGKFK, KSLHLPPGHEDNPGCSGSCAATAEKPTDSSPRPGGSQALR, and KETTSESSRNTSSPGASAEASHAAE. Positions 1832–1852 are enriched in low complexity; the sequence is SESSRNTSSPGASAEASHAAE. The BEACH-type PH domain maps to 2383–2508; the sequence is LDGEKVSQKV…DRSKALKSFS (126 aa). One can recognise a BEACH domain in the interval 2525-2819; sequence NLRKHPGFDR…QIFTKPHPSR (295 aa). The segment at 2812–2836 is disordered; the sequence is FTKPHPSRNTTGKNPGPGKDASTPV. WD repeat units follow at residues 2930 to 2969, 2979 to 3018, 3021 to 3060, 3070 to 3108, and 3150 to 3183; these read LAAWGPCLCAVCPSPTMIVTSGASAVVCIWELSLVKGRPR, GHTQAVTCLTASVTFSLLVSGSQDRTCILWDLDHLSRVAC, VHREGISAIAISDVSGTIVSCAGAHLSLWNVNGQPLASIT, TCCCIVEGPAWDASHVIITGSKDGMVRIWKTEDVKMPVP, and KASPAVTALAITRNQSKLLVGDEKGRIFCWSADG.

As to quaternary structure, interacts with HSP90AB1. As to expression, highly expressed in immune tissues, especially B lymphocytes.

It localises to the early endosome. The protein resides in the endoplasmic reticulum. Functionally, plays a critical role in the regulation of cDC1-mediated cross-presentation of viral and tumor antigens in dendritic cells. Mechanistically, acts near the plasma membrane and interacts with endosomal membranes to promote endosomal-to-cytosol antigen trafficking. Also plays a role in B-cell survival through regulation of autophagy. In Mus musculus (Mouse), this protein is WD repeat- and FYVE domain-containing protein 4.